Reading from the N-terminus, the 400-residue chain is Arabinan endo-1,5-alpha-L-arabinosidase B (400 aa).

Positions 1–16 are cleaved as a signal peptide; it reads MAVIFVLFFLVSMALS. N-linked (GlcNAc...) asparagine glycosylation is present at N24. D70 (proton acceptor) is an active-site residue. N-linked (GlcNAc...) asparagine glycosylation is present at N184. E277 functions as the Proton donor in the catalytic mechanism. The N-linked (GlcNAc...) asparagine glycan is linked to N372.

Belongs to the glycosyl hydrolase 43 family.

The protein localises to the secreted. The catalysed reaction is Endohydrolysis of (1-&gt;5)-alpha-arabinofuranosidic linkages in (1-&gt;5)-arabinans.. It functions in the pathway glycan metabolism; L-arabinan degradation. Endo-1,5-alpha-L-arabinanase involved in degradation of pectin. Its preferred substrate is linear 1,5-alpha-L-arabinan. In Emericella nidulans (strain FGSC A4 / ATCC 38163 / CBS 112.46 / NRRL 194 / M139) (Aspergillus nidulans), this protein is Arabinan endo-1,5-alpha-L-arabinosidase B (abnB).